A 158-amino-acid polypeptide reads, in one-letter code: Non-specific lipid transfer protein GPI-anchored 29 (158 aa).

The first 24 residues, 1–24 (MAYFSTATSLLLLVLSVSSPYVHG), serve as a signal peptide directing secretion. Intrachain disulfides connect Cys-28/Cys-71, Cys-38/Cys-55, Cys-56/Cys-95, and Cys-69/Cys-105. Asn-84 carries N-linked (GlcNAc...) asparagine glycosylation. A lipid anchor (GPI-anchor amidated serine) is attached at Ser-134. Residues 135 to 158 (KGNSLIPISGFSFVIVTALAMFRI) constitute a propeptide, removed in mature form.

This sequence belongs to the plant LTP family. As to expression, confined to the ovaries of the inflorescence.

The protein resides in the secreted. It localises to the cell membrane. Probable lipid transfer protein. The chain is Non-specific lipid transfer protein GPI-anchored 29 from Arabidopsis thaliana (Mouse-ear cress).